The sequence spans 412 residues: [Pyruvate dehydrogenase (acetyl-transferring)] kinase isozyme 4, mitochondrial (412 aa).

The Histidine kinase domain occupies 138-368 (ILEYKDTCTV…DAIIYLKALS (231 aa)). ATP contacts are provided by residues 254–261 (ELFKNAMR), Asp-293, 312–313 (ST), and 329–334 (GFGYGL).

Belongs to the PDK/BCKDK protein kinase family. In terms of assembly, homodimer. Interacts with the pyruvate dehydrogenase complex subunit DLAT, and is part of the multimeric pyruvate dehydrogenase complex that contains multiple copies of pyruvate dehydrogenase (E1), dihydrolipoamide acetyltransferase (DLAT, E2) and lipoamide dehydrogenase (DLD, E3).

The protein resides in the mitochondrion matrix. It carries out the reaction L-seryl-[pyruvate dehydrogenase E1 alpha subunit] + ATP = O-phospho-L-seryl-[pyruvate dehydrogenase E1 alpha subunit] + ADP + H(+). Functionally, kinase that plays a key role in regulation of glucose and fatty acid metabolism and homeostasis via phosphorylation of the pyruvate dehydrogenase subunits PDHA1 and PDHA2. This inhibits pyruvate dehydrogenase activity, and thereby regulates metabolite flux through the tricarboxylic acid cycle, down-regulates aerobic respiration and inhibits the formation of acetyl-coenzyme A from pyruvate. Inhibition of pyruvate dehydrogenase decreases glucose utilization and increases fat metabolism in response to prolonged fasting and starvation. Plays an important role in maintaining normal blood glucose levels under starvation, and is involved in the insulin signaling cascade. Via its regulation of pyruvate dehydrogenase activity, plays an important role in maintaining normal blood pH and in preventing the accumulation of ketone bodies under starvation. In the fed state, mediates cellular responses to glucose levels and to a high-fat diet. Regulates both fatty acid oxidation and de novo fatty acid biosynthesis. Plays a role in the generation of reactive oxygen species. Protects detached epithelial cells against anoikis. Plays a role in cell proliferation via its role in regulating carbohydrate and fatty acid metabolism. The protein is [Pyruvate dehydrogenase (acetyl-transferring)] kinase isozyme 4, mitochondrial (Pdk4) of Mus musculus (Mouse).